The following is a 137-amino-acid chain: ATP synthase epsilon chain (137 aa).

This sequence belongs to the ATPase epsilon chain family. As to quaternary structure, F-type ATPases have 2 components, CF(1) - the catalytic core - and CF(0) - the membrane proton channel. CF(1) has five subunits: alpha(3), beta(3), gamma(1), delta(1), epsilon(1). CF(0) has three main subunits: a, b and c.

Its subcellular location is the cellular thylakoid membrane. Produces ATP from ADP in the presence of a proton gradient across the membrane. This Synechococcus sp. (strain JA-2-3B'a(2-13)) (Cyanobacteria bacterium Yellowstone B-Prime) protein is ATP synthase epsilon chain.